The sequence spans 292 residues: Phosphatidylserine decarboxylase proenzyme (292 aa).

Catalysis depends on charge relay system; for autoendoproteolytic cleavage activity residues Asp-89, His-146, and Ser-252. Ser-252 acts as the Schiff-base intermediate with substrate; via pyruvic acid; for decarboxylase activity in catalysis. Ser-252 carries the pyruvic acid (Ser); by autocatalysis modification.

Belongs to the phosphatidylserine decarboxylase family. PSD-B subfamily. Prokaryotic type I sub-subfamily. Heterodimer of a large membrane-associated beta subunit and a small pyruvoyl-containing alpha subunit. Pyruvate serves as cofactor. Post-translationally, is synthesized initially as an inactive proenzyme. Formation of the active enzyme involves a self-maturation process in which the active site pyruvoyl group is generated from an internal serine residue via an autocatalytic post-translational modification. Two non-identical subunits are generated from the proenzyme in this reaction, and the pyruvate is formed at the N-terminus of the alpha chain, which is derived from the carboxyl end of the proenzyme. The autoendoproteolytic cleavage occurs by a canonical serine protease mechanism, in which the side chain hydroxyl group of the serine supplies its oxygen atom to form the C-terminus of the beta chain, while the remainder of the serine residue undergoes an oxidative deamination to produce ammonia and the pyruvoyl prosthetic group on the alpha chain. During this reaction, the Ser that is part of the protease active site of the proenzyme becomes the pyruvoyl prosthetic group, which constitutes an essential element of the active site of the mature decarboxylase.

It is found in the cell membrane. The catalysed reaction is a 1,2-diacyl-sn-glycero-3-phospho-L-serine + H(+) = a 1,2-diacyl-sn-glycero-3-phosphoethanolamine + CO2. The protein operates within phospholipid metabolism; phosphatidylethanolamine biosynthesis; phosphatidylethanolamine from CDP-diacylglycerol: step 2/2. In terms of biological role, catalyzes the formation of phosphatidylethanolamine (PtdEtn) from phosphatidylserine (PtdSer). In Shewanella baltica (strain OS185), this protein is Phosphatidylserine decarboxylase proenzyme.